The chain runs to 317 residues: Methionyl-tRNA formyltransferase (317 aa).

110–113 (SLLP) contributes to the (6S)-5,6,7,8-tetrahydrofolate binding site.

This sequence belongs to the Fmt family.

It carries out the reaction L-methionyl-tRNA(fMet) + (6R)-10-formyltetrahydrofolate = N-formyl-L-methionyl-tRNA(fMet) + (6S)-5,6,7,8-tetrahydrofolate + H(+). Its function is as follows. Attaches a formyl group to the free amino group of methionyl-tRNA(fMet). The formyl group appears to play a dual role in the initiator identity of N-formylmethionyl-tRNA by promoting its recognition by IF2 and preventing the misappropriation of this tRNA by the elongation apparatus. In Bacillus subtilis (strain 168), this protein is Methionyl-tRNA formyltransferase.